We begin with the raw amino-acid sequence, 679 residues long: Protein hook (679 aa).

Residues 6 to 123 (NEMYYSLLEW…RLLQLVLGCA (118 aa)) enclose the Calponin-homology (CH) domain. 2 coiled-coil regions span residues 135-437 (EIMC…LKCG) and 480-574 (QTAL…QEIL).

Belongs to the hook family. In terms of assembly, homodimer. Interacts with microtubules via its N-terminus.

It is found in the cytoplasm. It localises to the cytoskeleton. Its subcellular location is the endosome. The protein localises to the synapse. Its function is as follows. Involved in endocytic trafficking by stabilizing organelles of the endocytic pathway. Probably acts as a cytoskeletal linker protein required to tether endosome vesicles to the cytoskeleton. Involved in modulation of endocytosis at stages required for down-regulation of membrane proteins that control synapse size. Not involved in synaptic vesicle recycling. Required in R7 cells for boss endocytosis into multivesicular bodies (MVBs). Has a role in regulating adult longevity. This Drosophila sechellia (Fruit fly) protein is Protein hook.